A 426-amino-acid polypeptide reads, in one-letter code: Gamma-glutamyl phosphate reductase (426 aa).

It belongs to the gamma-glutamyl phosphate reductase family.

It is found in the cytoplasm. The enzyme catalyses L-glutamate 5-semialdehyde + phosphate + NADP(+) = L-glutamyl 5-phosphate + NADPH + H(+). Its pathway is amino-acid biosynthesis; L-proline biosynthesis; L-glutamate 5-semialdehyde from L-glutamate: step 2/2. Functionally, catalyzes the NADPH-dependent reduction of L-glutamate 5-phosphate into L-glutamate 5-semialdehyde and phosphate. The product spontaneously undergoes cyclization to form 1-pyrroline-5-carboxylate. This chain is Gamma-glutamyl phosphate reductase, found in Sorangium cellulosum (strain So ce56) (Polyangium cellulosum (strain So ce56)).